A 239-amino-acid polypeptide reads, in one-letter code: 2,3,4,5-tetrahydropyridine-2,6-dicarboxylate N-acetyltransferase (239 aa).

Belongs to the transferase hexapeptide repeat family. DapH subfamily.

The catalysed reaction is (S)-2,3,4,5-tetrahydrodipicolinate + acetyl-CoA + H2O = L-2-acetamido-6-oxoheptanedioate + CoA. It participates in amino-acid biosynthesis; L-lysine biosynthesis via DAP pathway; LL-2,6-diaminopimelate from (S)-tetrahydrodipicolinate (acetylase route): step 1/3. Its function is as follows. Catalyzes the transfer of an acetyl group from acetyl-CoA to tetrahydrodipicolinate. The protein is 2,3,4,5-tetrahydropyridine-2,6-dicarboxylate N-acetyltransferase of Staphylococcus haemolyticus (strain JCSC1435).